We begin with the raw amino-acid sequence, 84 residues long: Exodeoxyribonuclease 7 small subunit (84 aa).

It belongs to the XseB family. As to quaternary structure, heterooligomer composed of large and small subunits.

It localises to the cytoplasm. The enzyme catalyses Exonucleolytic cleavage in either 5'- to 3'- or 3'- to 5'-direction to yield nucleoside 5'-phosphates.. Bidirectionally degrades single-stranded DNA into large acid-insoluble oligonucleotides, which are then degraded further into small acid-soluble oligonucleotides. The chain is Exodeoxyribonuclease 7 small subunit from Caulobacter vibrioides (strain ATCC 19089 / CIP 103742 / CB 15) (Caulobacter crescentus).